Here is a 404-residue protein sequence, read N- to C-terminus: Probable tRNA sulfurtransferase (404 aa).

Positions Thr60–Thr165 constitute a THUMP domain. ATP contacts are provided by residues Met183–Leu184, His208–Phe209, Arg265, Gly287, and Gln296.

Belongs to the ThiI family.

It localises to the cytoplasm. It catalyses the reaction [ThiI sulfur-carrier protein]-S-sulfanyl-L-cysteine + a uridine in tRNA + 2 reduced [2Fe-2S]-[ferredoxin] + ATP + H(+) = [ThiI sulfur-carrier protein]-L-cysteine + a 4-thiouridine in tRNA + 2 oxidized [2Fe-2S]-[ferredoxin] + AMP + diphosphate. The enzyme catalyses [ThiS sulfur-carrier protein]-C-terminal Gly-Gly-AMP + S-sulfanyl-L-cysteinyl-[cysteine desulfurase] + AH2 = [ThiS sulfur-carrier protein]-C-terminal-Gly-aminoethanethioate + L-cysteinyl-[cysteine desulfurase] + A + AMP + 2 H(+). Its pathway is cofactor biosynthesis; thiamine diphosphate biosynthesis. Functionally, catalyzes the ATP-dependent transfer of a sulfur to tRNA to produce 4-thiouridine in position 8 of tRNAs, which functions as a near-UV photosensor. Also catalyzes the transfer of sulfur to the sulfur carrier protein ThiS, forming ThiS-thiocarboxylate. This is a step in the synthesis of thiazole, in the thiamine biosynthesis pathway. The sulfur is donated as persulfide by IscS. The polypeptide is Probable tRNA sulfurtransferase (Streptococcus pneumoniae (strain 70585)).